A 509-amino-acid chain; its full sequence is Lysine--tRNA ligase (509 aa).

A compositionally biased stretch (polar residues) spans 1–18 (MSEQNPTQAAKQAPQQEL). A disordered region spans residues 1 to 20 (MSEQNPTQAAKQAPQQELND). The Mg(2+) site is built by E418 and E425.

The protein belongs to the class-II aminoacyl-tRNA synthetase family. As to quaternary structure, homodimer. The cofactor is Mg(2+).

The protein localises to the cytoplasm. The enzyme catalyses tRNA(Lys) + L-lysine + ATP = L-lysyl-tRNA(Lys) + AMP + diphosphate. This Psychromonas ingrahamii (strain DSM 17664 / CCUG 51855 / 37) protein is Lysine--tRNA ligase.